A 248-amino-acid chain; its full sequence is Cyclin-Q (248 aa).

Met1 is modified (N-acetylmethionine). Positions 1 to 12 (MEAPEGGGGGPA) are enriched in gly residues. Residues 1-21 (MEAPEGGGGGPAARGPEGQPA) form a disordered region.

The protein belongs to the cyclin family. Cyclin-like FAM58 subfamily. Associates with CDK10 to promote its kinase activity. Interacts with SALL1.

In terms of biological role, activating cyclin for the cyclin-associated kinase CDK10. This chain is Cyclin-Q, found in Homo sapiens (Human).